Reading from the N-terminus, the 252-residue chain is 5'-nucleotidase SurE (252 aa).

Positions 8, 9, 39, and 95 each coordinate a divalent metal cation.

This sequence belongs to the SurE nucleotidase family. Requires a divalent metal cation as cofactor.

Its subcellular location is the cytoplasm. It carries out the reaction a ribonucleoside 5'-phosphate + H2O = a ribonucleoside + phosphate. Nucleotidase that shows phosphatase activity on nucleoside 5'-monophosphates. The polypeptide is 5'-nucleotidase SurE (Clostridium botulinum (strain 657 / Type Ba4)).